We begin with the raw amino-acid sequence, 300 residues long: Acetylglutamate kinase (300 aa).

Substrate is bound by residues 73–74, R95, and N197; that span reads GG.

The protein belongs to the acetylglutamate kinase family. ArgB subfamily.

The protein localises to the cytoplasm. It catalyses the reaction N-acetyl-L-glutamate + ATP = N-acetyl-L-glutamyl 5-phosphate + ADP. The protein operates within amino-acid biosynthesis; L-arginine biosynthesis; N(2)-acetyl-L-ornithine from L-glutamate: step 2/4. Its function is as follows. Catalyzes the ATP-dependent phosphorylation of N-acetyl-L-glutamate. The sequence is that of Acetylglutamate kinase from Bordetella avium (strain 197N).